Consider the following 182-residue polypeptide: Large ribosomal subunit protein uL16 (182 aa).

The protein belongs to the universal ribosomal protein uL16 family.

The chain is Large ribosomal subunit protein uL16 from Pyrobaculum islandicum (strain DSM 4184 / JCM 9189 / GEO3).